We begin with the raw amino-acid sequence, 898 residues long: Nitrate reductase [NAD(P)H] (898 aa).

Positions 1-15 (MAASVENRRFTHHEP) are enriched in basic and acidic residues. The interval 1–65 (MAASVENRRF…SSSEDENEND (65 aa)) is disordered. Mo-molybdopterin is bound at residue Cys180. Residues 528-603 (SKMFSMSEVK…LEDYRIGELI (76 aa)) enclose the Cytochrome b5 heme-binding domain. Positions 563 and 586 each coordinate heme. The FAD-binding FR-type domain occupies 642-754 (GAKIPTKLVY…KGPLGHVEYT (113 aa)). Residues 694 to 697 (RAYT), 711 to 715 (VVKIY), Phe716, Phe723, 728 to 730 (LMS), and Thr781 contribute to the FAD site.

It belongs to the nitrate reductase family. In terms of assembly, homodimer. FAD is required as a cofactor. The cofactor is heme. Mo-molybdopterin serves as cofactor.

It catalyses the reaction nitrite + NAD(+) + H2O = nitrate + NADH + H(+). It carries out the reaction nitrite + NADP(+) + H2O = nitrate + NADPH + H(+). In terms of biological role, nitrate reductase is a key enzyme involved in the first step of nitrate assimilation in plants, fungi and bacteria. This chain is Nitrate reductase [NAD(P)H] (NIA1), found in Betula pendula (European white birch).